Consider the following 369-residue polypeptide: 1-aminocyclopropane-1-carboxylate oxidase homolog 2 (369 aa).

A Fe2OG dioxygenase domain is found at 217-318; it reads KGLRMLCHYF…VSVACFFHTH (102 aa). Fe cation-binding residues include His241, Asp243, and His297.

The protein belongs to the iron/ascorbate-dependent oxidoreductase family. Requires Fe cation as cofactor.

This chain is 1-aminocyclopropane-1-carboxylate oxidase homolog 2, found in Arabidopsis thaliana (Mouse-ear cress).